Consider the following 632-residue polypeptide: Probable potassium transport system protein Kup 1 (632 aa).

The next 12 membrane-spanning stretches (helical) occupy residues 17–37 (LFYLALGSVGVVYGDIGTSPL), 60–80 (LISLMIWALTIIVTIKYVLFL), 106–126 (TALLMLLGLMGAALFLGDAMI), 144–164 (PSLAEYIVPISVVILALLFVV), 175–195 (FFGPITAVWFLVMAAAGISHI), 210–230 (AVSFLLHEGFYGVVVLGAVFL), 254–274 (WFLLVFPALTLNYLGQGALVL), 292–312 (ALLPVVILATAATIIASQAVI), 344–364 (IFLPSVNAVLFFGVIFLVLSF), 370–390 (LATAYGISVTGAMVVTSIMAF), 401–421 (LPVAVIALAPLVVLEMIFLGA), and 426–446 (IHDGGYIPILIATAFTVVMWT).

The protein belongs to the HAK/KUP transporter (TC 2.A.72) family.

It is found in the cell inner membrane. It carries out the reaction K(+)(in) + H(+)(in) = K(+)(out) + H(+)(out). Its function is as follows. Transport of potassium into the cell. Likely operates as a K(+):H(+) symporter. The sequence is that of Probable potassium transport system protein Kup 1 from Rhizobium etli (strain ATCC 51251 / DSM 11541 / JCM 21823 / NBRC 15573 / CFN 42).